Here is a 323-residue protein sequence, read N- to C-terminus: tRNA dimethylallyltransferase (323 aa).

12 to 19 lines the ATP pocket; sequence GPTAAGKT. 14–19 provides a ligand contact to substrate; it reads TAAGKT. Interaction with substrate tRNA stretches follow at residues 37-40 and 161-165; these read DSAL and QRLIR.

It belongs to the IPP transferase family. As to quaternary structure, monomer. Requires Mg(2+) as cofactor.

It carries out the reaction adenosine(37) in tRNA + dimethylallyl diphosphate = N(6)-dimethylallyladenosine(37) in tRNA + diphosphate. Functionally, catalyzes the transfer of a dimethylallyl group onto the adenine at position 37 in tRNAs that read codons beginning with uridine, leading to the formation of N6-(dimethylallyl)adenosine (i(6)A). This Pseudomonas syringae pv. tomato (strain ATCC BAA-871 / DC3000) protein is tRNA dimethylallyltransferase.